Here is a 589-residue protein sequence, read N- to C-terminus: uncharacterized protein (589 aa).

One can recognise an RRM domain in the interval 242 to 314 (TALEVRNIPE…RFIKIFWYNP (73 aa)). 3 disordered regions span residues 322 to 348 (PKKFASHKSPTTSDSSNVESSEDVDPA), 443 to 465 (ESPAASNGSHHPYASGLPQRGTN), and 566 to 589 (TSMETGESNTSDNMNIEVEEGRWR). The residue at position 330 (Ser330) is a Phosphoserine. A compositionally biased stretch (low complexity) spans 330–340 (SPTTSDSSNVE). Phosphothreonine is present on Thr332. Ser334 is subject to Phosphoserine. Residues 566–579 (TSMETGESNTSDNM) are compositionally biased toward polar residues.

It is found in the nucleus. This is an uncharacterized protein from Schizosaccharomyces pombe (strain 972 / ATCC 24843) (Fission yeast).